A 215-amino-acid chain; its full sequence is CASP-like protein 1U3 (215 aa).

The Cytoplasmic segment spans residues Met1 to Thr13. The helical transmembrane segment at Ala14–Met34 threads the bilayer. Over Ser35–Pro68 the chain is Extracellular. The helical transmembrane segment at Phe69–Leu89 threads the bilayer. At Val90 to Pro105 the chain is on the cytoplasmic side. A helical membrane pass occupies residues Leu106–Val126. The Extracellular segment spans residues Ser127–Gln161. A helical transmembrane segment spans residues Val162 to Val182. Residues Arg183–His215 lie on the Cytoplasmic side of the membrane. Residues Gly187–His215 are disordered. Residues Asp195 to Gly205 show a composition bias toward low complexity.

Belongs to the Casparian strip membrane proteins (CASP) family. As to quaternary structure, homodimer and heterodimers.

The protein resides in the cell membrane. This chain is CASP-like protein 1U3, found in Sorghum bicolor (Sorghum).